The chain runs to 244 residues: Mannose-binding protein C (244 aa).

Positions 1–18 (MSLFTSFLLLCVLTAVYA) are cleaved as a signal peptide. A Collagen-like domain is found at 38–96 (GLNGFPGKDGHDGAKGEKGEPGQGLRGLQGPPGKVGPAGPPGNPGSKGATGPKGDRGES). Position 43 is a 4-hydroxyproline (Pro43). The interval 43-99 (PGKDGHDGAKGEKGEPGQGLRGLQGPPGKVGPAGPPGNPGSKGATGPKGDRGESVEF) is disordered. The span at 45-57 (KDGHDGAKGEKGE) shows a compositional bias: basic and acidic residues. Residues Pro58, Pro69, Pro78, and Pro81 each carry the 4-hydroxyproline modification. Residues 65 to 74 (LQGPPGKVGP) show a composition bias toward low complexity. Residues 108-126 (IAALRSELRAMRKWVLLSM) adopt a coiled-coil conformation. Residues 129 to 241 (NVGKKYFMSS…CSDSFLVVCE (113 aa)) form the C-type lectin domain. Disulfide bonds link Cys151/Cys240 and Cys218/Cys232.

As to quaternary structure, oligomeric complex of 3 or more homotrimers. Interacts with MASP1 and MASP2. Interacts with MEP1A and MEP1B and may inhibit their catalytic activity.

Its subcellular location is the secreted. In terms of biological role, calcium-dependent lectin involved in innate immune defense. Binds mannose, fucose and N-acetylglucosamine on different microorganisms and activates the lectin complement pathway. Binds to late apoptotic cells, as well as to apoptotic blebs and to necrotic cells, but not to early apoptotic cells, facilitating their uptake by macrophages. This is Mannose-binding protein C (Mbl2) from Rattus norvegicus (Rat).